Reading from the N-terminus, the 634-residue chain is Probable threonine--tRNA ligase, cytoplasmic (634 aa).

The region spanning 1–61 (MSIYVTFKGQ…NENQKIELYD (61 aa)) is the TGS domain.

This sequence belongs to the class-II aminoacyl-tRNA synthetase family.

It localises to the cytoplasm. The catalysed reaction is tRNA(Thr) + L-threonine + ATP = L-threonyl-tRNA(Thr) + AMP + diphosphate + H(+). This Enterocytozoon bieneusi (strain H348) (Microsporidian parasite) protein is Probable threonine--tRNA ligase, cytoplasmic.